The primary structure comprises 159 residues: Cytochrome c-type biogenesis protein CcmE (159 aa).

Over 1–8 (MNIRRKNR) the chain is Cytoplasmic. Residues 9 to 29 (LWIACAVLAGLALTIGLVLYA) form a helical; Signal-anchor for type II membrane protein membrane-spanning segment. The Periplasmic portion of the chain corresponds to 30–159 (LRSNIDLFYT…PASVYKDPAS (130 aa)). 2 residues coordinate heme: H130 and Y134. Positions 134 to 147 (YTPPEVEKAMEANH) are enriched in basic and acidic residues. Positions 134–159 (YTPPEVEKAMEANHRRPASVYKDPAS) are disordered.

The protein belongs to the CcmE/CycJ family.

It is found in the cell inner membrane. Its function is as follows. Heme chaperone required for the biogenesis of c-type cytochromes. Transiently binds heme delivered by CcmC and transfers the heme to apo-cytochromes in a process facilitated by CcmF and CcmH. This Escherichia coli (strain SMS-3-5 / SECEC) protein is Cytochrome c-type biogenesis protein CcmE.